Reading from the N-terminus, the 131-residue chain is Hypocretin neuropeptide precursor (131 aa).

The signal sequence occupies residues 1–33; it reads MNPPFAKVSWATVTLLLLLLLLPPAVLSPGAAA. Pyrrolidone carboxylic acid is present on glutamine 34. 2 disulfides stabilise this stretch: cysteine 39/cysteine 45 and cysteine 40/cysteine 47. Leucine 66 is subject to Leucine amide. A Methionine amide modification is found at methionine 97. The propeptide at 98 to 131 is removed in mature form; it reads GRRAGAEPAPRLCPGRRCLAAAASSVAPGGRSGI.

Belongs to the orexin family. Post-translationally, specific enzymatic cleavages at paired basic residues yield the different active peptides.

It localises to the rough endoplasmic reticulum. Its subcellular location is the cytoplasmic vesicle. It is found in the synapse. Its function is as follows. Neuropeptides that play a significant role in the regulation of food intake and sleep-wakefulness, possibly by coordinating the complex behavioral and physiologic responses of these complementary homeostatic functions. A broader role in the homeostatic regulation of energy metabolism, autonomic function, hormonal balance and the regulation of body fluids, is also suggested. In terms of biological role, binds to orexin receptors HCRTR1/OX1R and HCRTR2/OX2R with a high affinity. Stimulates food intake. Modulates pituitary luteinizing hormone secretion in an ovarian steroid-dependent manner. Functionally, binds to orexin receptor HCRTR2/OX2R only. Stimulates food intake. Modulates pituitary luteinizing hormone secretion in an ovarian steroid-dependent manner. The chain is Hypocretin neuropeptide precursor (HCRT) from Sus scrofa (Pig).